Consider the following 205-residue polypeptide: Methylthioribulose-1-phosphate dehydratase (205 aa).

Zn(2+) contacts are provided by histidine 98 and histidine 100.

The protein belongs to the aldolase class II family. MtnB subfamily. Zn(2+) is required as a cofactor.

It carries out the reaction 5-(methylsulfanyl)-D-ribulose 1-phosphate = 5-methylsulfanyl-2,3-dioxopentyl phosphate + H2O. The protein operates within amino-acid biosynthesis; L-methionine biosynthesis via salvage pathway; L-methionine from S-methyl-5-thio-alpha-D-ribose 1-phosphate: step 2/6. Catalyzes the dehydration of methylthioribulose-1-phosphate (MTRu-1-P) into 2,3-diketo-5-methylthiopentyl-1-phosphate (DK-MTP-1-P). The chain is Methylthioribulose-1-phosphate dehydratase from Gluconacetobacter diazotrophicus (strain ATCC 49037 / DSM 5601 / CCUG 37298 / CIP 103539 / LMG 7603 / PAl5).